The sequence spans 61 residues: Photosystem II reaction center protein K (61 aa).

Positions 1 to 24 (MLNIFSLICICLNSALYSSSLFFA) are excised as a propeptide. The chain crosses the membrane as a helical span at residues 40–60 (MPVIPLFFFLLAFVWQAAVSF).

Belongs to the PsbK family. PSII is composed of 1 copy each of membrane proteins PsbA, PsbB, PsbC, PsbD, PsbE, PsbF, PsbH, PsbI, PsbJ, PsbK, PsbL, PsbM, PsbT, PsbX, PsbY, PsbZ, Psb30/Ycf12, at least 3 peripheral proteins of the oxygen-evolving complex and a large number of cofactors. It forms dimeric complexes.

It localises to the plastid. The protein localises to the chloroplast thylakoid membrane. In terms of biological role, one of the components of the core complex of photosystem II (PSII). PSII is a light-driven water:plastoquinone oxidoreductase that uses light energy to abstract electrons from H(2)O, generating O(2) and a proton gradient subsequently used for ATP formation. It consists of a core antenna complex that captures photons, and an electron transfer chain that converts photonic excitation into a charge separation. This Panax ginseng (Korean ginseng) protein is Photosystem II reaction center protein K.